A 323-amino-acid chain; its full sequence is HTH-type transcriptional activator CmpR (323 aa).

The region spanning 4-61 (LTLHQLKVFEAAARHSSFTRAAEELYLTQPTVSIQVKQLTKAVGLPLFEQIGKRLYLT) is the HTH lysR-type domain. The H-T-H motif DNA-binding region spans 21 to 40 (FTRAAEELYLTQPTVSIQVK). The segment at 304–323 (IPESTTTDPELDAPQPVVGV) is disordered.

This sequence belongs to the LysR transcriptional regulatory family.

The protein resides in the cytoplasm. Activates transcription of the cmpABCD operon under carbon dioxide-limited conditions. The protein is HTH-type transcriptional activator CmpR (cmpR) of Synechococcus elongatus (strain ATCC 33912 / PCC 7942 / FACHB-805) (Anacystis nidulans R2).